The primary structure comprises 252 residues: Imidazole glycerol phosphate synthase subunit HisF (252 aa).

Active-site residues include Asp11 and Asp130.

The protein belongs to the HisA/HisF family. Heterodimer of HisH and HisF.

The protein resides in the cytoplasm. The enzyme catalyses 5-[(5-phospho-1-deoxy-D-ribulos-1-ylimino)methylamino]-1-(5-phospho-beta-D-ribosyl)imidazole-4-carboxamide + L-glutamine = D-erythro-1-(imidazol-4-yl)glycerol 3-phosphate + 5-amino-1-(5-phospho-beta-D-ribosyl)imidazole-4-carboxamide + L-glutamate + H(+). It functions in the pathway amino-acid biosynthesis; L-histidine biosynthesis; L-histidine from 5-phospho-alpha-D-ribose 1-diphosphate: step 5/9. In terms of biological role, IGPS catalyzes the conversion of PRFAR and glutamine to IGP, AICAR and glutamate. The HisF subunit catalyzes the cyclization activity that produces IGP and AICAR from PRFAR using the ammonia provided by the HisH subunit. This chain is Imidazole glycerol phosphate synthase subunit HisF, found in Bacillus cereus (strain ATCC 10987 / NRS 248).